The primary structure comprises 392 residues: Succinate--CoA ligase [ADP-forming] subunit beta (392 aa).

The region spanning 9 to 248 is the ATP-grasp domain; the sequence is KGILKQFGVA…ITEEDPLEYE (240 aa). Residues K50, 57–59, E103, M106, and E111 each bind ATP; that span reads GRG. Mg(2+) contacts are provided by N203 and D217. Residues N268 and 325–327 each bind substrate; that span reads GIV.

It belongs to the succinate/malate CoA ligase beta subunit family. As to quaternary structure, heterotetramer of two alpha and two beta subunits. Mg(2+) is required as a cofactor.

It catalyses the reaction succinate + ATP + CoA = succinyl-CoA + ADP + phosphate. The enzyme catalyses GTP + succinate + CoA = succinyl-CoA + GDP + phosphate. Its pathway is carbohydrate metabolism; tricarboxylic acid cycle; succinate from succinyl-CoA (ligase route): step 1/1. Functionally, succinyl-CoA synthetase functions in the citric acid cycle (TCA), coupling the hydrolysis of succinyl-CoA to the synthesis of either ATP or GTP and thus represents the only step of substrate-level phosphorylation in the TCA. The beta subunit provides nucleotide specificity of the enzyme and binds the substrate succinate, while the binding sites for coenzyme A and phosphate are found in the alpha subunit. The sequence is that of Succinate--CoA ligase [ADP-forming] subunit beta from Chlorobaculum tepidum (strain ATCC 49652 / DSM 12025 / NBRC 103806 / TLS) (Chlorobium tepidum).